A 288-amino-acid polypeptide reads, in one-letter code: Homoserine kinase (288 aa).

An ATP-binding site is contributed by 79–89 (PLARGLGSSSS).

It belongs to the GHMP kinase family. Homoserine kinase subfamily.

Its subcellular location is the cytoplasm. It catalyses the reaction L-homoserine + ATP = O-phospho-L-homoserine + ADP + H(+). It functions in the pathway amino-acid biosynthesis; L-threonine biosynthesis; L-threonine from L-aspartate: step 4/5. Functionally, catalyzes the ATP-dependent phosphorylation of L-homoserine to L-homoserine phosphate. In Streptococcus sanguinis (strain SK36), this protein is Homoserine kinase.